We begin with the raw amino-acid sequence, 384 residues long: Ribosomal RNA large subunit methyltransferase G (384 aa).

The protein belongs to the methyltransferase superfamily. RlmG family.

The protein resides in the cytoplasm. It catalyses the reaction guanosine(1835) in 23S rRNA + S-adenosyl-L-methionine = N(2)-methylguanosine(1835) in 23S rRNA + S-adenosyl-L-homocysteine + H(+). Functionally, specifically methylates the guanine in position 1835 (m2G1835) of 23S rRNA. This is Ribosomal RNA large subunit methyltransferase G from Pseudoalteromonas atlantica (strain T6c / ATCC BAA-1087).